The primary structure comprises 372 residues: Glutamate 5-kinase (372 aa).

Residue Lys-14 coordinates ATP. Substrate is bound by residues Ser-54, Asp-141, and Asn-153. Position 173-174 (173-174) interacts with ATP; that stretch reads TD. One can recognise a PUA domain in the interval 280–358; it reads RGTVVIDDGA…SQIESLLGYS (79 aa).

This sequence belongs to the glutamate 5-kinase family.

It is found in the cytoplasm. The catalysed reaction is L-glutamate + ATP = L-glutamyl 5-phosphate + ADP. It functions in the pathway amino-acid biosynthesis; L-proline biosynthesis; L-glutamate 5-semialdehyde from L-glutamate: step 1/2. Catalyzes the transfer of a phosphate group to glutamate to form L-glutamate 5-phosphate. This Methylibium petroleiphilum (strain ATCC BAA-1232 / LMG 22953 / PM1) protein is Glutamate 5-kinase.